The following is a 476-amino-acid chain: MAQYSAEFKQAKVLVLGDVMLDRYWFGATNRISPEAPVPVVRVQENEERAGGAANVAMNIASLNVPVQLMGLIGQDETGSALSLLLEKQKIDCNFVALETHPTITKLRILSRHQQLLRLDFEEDFNNVDCKDLLAKLESAVKNYGALILSDYGKGTLKDVQKMIQIARKANVPVLIDPKGTDFERYCGATLLTPNMSEFEAVVGKCNTEEEIIKKGLKLISDIELTALLVTRSEKGMTLLRPNQEPYHLPTVAKEVFDVTGAGDTVISVLATALADGRSFEESCYLANVAAGIVVGKLGTSTVSTVELENAIHARPETGFGIMSEAELKDAVAQAKARGEKIVMTNGCFDILHPGHISYLENARKLGDRLIVAVNSDDSVKRLKGESRPINNLENRMAVLAGLASVDWLVPFTEDTPQHLIGEILPDLLVKGGDYKPEEIAGSKEVWANGGDVKVLNFENGCSTTNVIEKIKLLKD.

The ribokinase stretch occupies residues 1–318; it reads MAQYSAEFKQ…ENAIHARPET (318 aa). 195–198 provides a ligand contact to ATP; sequence NMSE. Asp-264 is a catalytic residue. The segment at 344–476 is cytidylyltransferase; that stretch reads MTNGCFDILH…VIEKIKLLKD (133 aa).

It in the N-terminal section; belongs to the carbohydrate kinase PfkB family. The protein in the C-terminal section; belongs to the cytidylyltransferase family. As to quaternary structure, homodimer.

The catalysed reaction is D-glycero-beta-D-manno-heptose 7-phosphate + ATP = D-glycero-beta-D-manno-heptose 1,7-bisphosphate + ADP + H(+). The enzyme catalyses D-glycero-beta-D-manno-heptose 1-phosphate + ATP + H(+) = ADP-D-glycero-beta-D-manno-heptose + diphosphate. The protein operates within nucleotide-sugar biosynthesis; ADP-L-glycero-beta-D-manno-heptose biosynthesis; ADP-L-glycero-beta-D-manno-heptose from D-glycero-beta-D-manno-heptose 7-phosphate: step 1/4. It participates in nucleotide-sugar biosynthesis; ADP-L-glycero-beta-D-manno-heptose biosynthesis; ADP-L-glycero-beta-D-manno-heptose from D-glycero-beta-D-manno-heptose 7-phosphate: step 3/4. Functionally, catalyzes the phosphorylation of D-glycero-D-manno-heptose 7-phosphate at the C-1 position to selectively form D-glycero-beta-D-manno-heptose-1,7-bisphosphate. In terms of biological role, catalyzes the ADP transfer from ATP to D-glycero-beta-D-manno-heptose 1-phosphate, yielding ADP-D-glycero-beta-D-manno-heptose. This Haemophilus influenzae (strain PittGG) protein is Bifunctional protein HldE.